A 233-amino-acid chain; its full sequence is DNA repair protein RecO (233 aa).

This sequence belongs to the RecO family.

Involved in DNA repair and RecF pathway recombination. The chain is DNA repair protein RecO from Pseudomonas aeruginosa (strain LESB58).